The sequence spans 216 residues: Talanin (216 aa).

In terms of tissue distribution, isoform 4 is expressed in placenta, lung, kidney and pancreas.

May play a role in uric acid excretion. This is Talanin (ZNF365) from Homo sapiens (Human).